The following is a 504-amino-acid chain: Zinc finger protein AEBP2 (504 aa).

A disordered region spans residues 1 to 219 (MAAALADMAD…SRMDSEDSIS (219 aa)). Residue Ala2 is modified to N-acetylalanine. Residues 16-30 (RLSPLSPGSPGPAAR) show a composition bias toward low complexity. A phosphoserine mark is found at Ser18, Ser21, and Ser24. Residues 36–49 (PEEEEEEDDEEAEA) are compositionally biased toward acidic residues. The segment covering 59–69 (GGAGGGAGGGE) has biased composition (gly residues). Residues 86–110 (GDEDEDEEDDEDEGSSSGGAEEESS) are compositionally biased toward acidic residues. A compositionally biased stretch (low complexity) spans 129–140 (SLSPGAASSSSG). Phosphoserine is present on Ser131. Residues 142 to 153 (GDGKEGLEEPKG) are compositionally biased toward basic and acidic residues. Gly residues-rich tracts occupy residues 154–168 (PRGG…GGGS) and 178–189 (GDEGYGTGGGGS). 3 positions are modified to phosphoserine: Ser199, Ser203, and Ser204. The interaction with RBBP4 stretch occupies residues 202–287 (MSSDGEPLSR…IHVDGQRGGV (86 aa)). A C2H2-type 1 zinc finger spans residues 254-279 (YNCCWDQCQACFNSSPDLADHIRSIH). Residues 293-315 (KGCKVYNTPSTSQSWLQRHMLTH) form a C2H2-type 2; degenerate zinc finger. A C2H2-type 3 zinc finger spans residues 321–345 (FKCVVGGCNASFASQGGLARHVPTH). Residues 345 to 358 (HFSQQNSSKVSSQP) show a composition bias toward polar residues. Residues 345 to 387 (HFSQQNSSKVSSQPKAKEESPSKAGMNKRRKLKNKRRRSLPRP) are disordered. Over residues 370 to 385 (MNKRRKLKNKRRRSLP) the composition is skewed to basic residues. Ser383 is subject to Phosphoserine. Positions 400-471 (RHRAICFNLS…QLKTKVVHLS (72 aa)) are interaction with SUZ12. An important for nucleosome binding activity of the PRC2 complex region spans residues 488–504 (TMPQKRLKRFDILNFPR).

Belongs to the AEBP2/jing C2H2-type zinc-finger family. As to quaternary structure, self-associates. Associates with the PRC2 complex, which consists of the core components EED, EZH1 or EZH2, SUZ12, and RBBP4, and various combinations of accessory subunits including AEBP2, JARID2, PHF19, MTF2 and EPOP. Found in a monomeric PRC2.2 (class 2) complex consisting of at least SUZ12, RBBP4, AEBP2 and JARID2. Within the PRC2 complex, interacts directly with SUZ12; competes with PHF19 for SUZ12 binding. Interacts with EED, EZH2, and RBBP4. May also interact with RBBP7. Expressed in brain, brown adipose tissue, white adipose tissue, heart, kidney, lung, skeletal muscle, small intestine and spleen. Expressed at low levels in liver.

Its subcellular location is the nucleus. In terms of biological role, acts as an accessory subunit for the core Polycomb repressive complex 2 (PRC2), which mediates histone H3K27 (H3K27me3) trimethylation on chromatin leading to transcriptional repression of the affected target gene. Plays a role in nucleosome localization of the PRC2 complex. The polypeptide is Zinc finger protein AEBP2 (Aebp2) (Mus musculus (Mouse)).